Reading from the N-terminus, the 382-residue chain is Gap junction alpha-1 protein (382 aa).

Topologically, residues Gly-2–Lys-23 are cytoplasmic. The residue at position 5 (Ser-5) is a Phosphoserine. The chain crosses the membrane as a helical span at residues Val-24–Ala-44. Residues Trp-45–Arg-76 are Extracellular-facing. 2 cysteine pairs are disulfide-bonded: Cys-54–Cys-192 and Cys-187–Cys-198. A helical transmembrane segment spans residues Phe-77–Phe-97. Residues Tyr-98–Tyr-155 are Cytoplasmic-facing. Lys-144 participates in a covalent cross-link: Glycyl lysine isopeptide (Lys-Gly) (interchain with G-Cter in SUMO). A helical membrane pass occupies residues Ile-156–Ile-176. The Extracellular segment spans residues Tyr-177–Thr-207. Residues Ile-208 to Leu-228 traverse the membrane as a helical segment. The Cytoplasmic portion of the chain corresponds to Phe-229 to Ile-382. A Glycyl lysine isopeptide (Lys-Gly) (interchain with G-Cter in SUMO) cross-link involves residue Lys-237. The segment at Ser-244–Ile-382 is interaction with NOV. At Tyr-247 the chain carries Phosphotyrosine. Phosphoserine is present on residues Ser-255 and Ser-262. The segment at Lys-264–Ile-382 is interaction with UBQLN4. Residue Cys-271 is modified to S-nitrosocysteine. Thr-275 carries the post-translational modification Phosphothreonine. 2 positions are modified to phosphoserine: Ser-306 and Ser-314. Residues Gln-317–Ala-332 show a composition bias toward polar residues. The disordered stretch occupies residues Gln-317–Ile-382. Ser-325 carries the post-translational modification Phosphoserine; by CK1. At Thr-326 the chain carries Phosphothreonine. 2 positions are modified to phosphoserine; by CK1: Ser-328 and Ser-330. Residues Ser-344 and Ser-365 each carry the phosphoserine modification. A compositionally biased stretch (low complexity) spans Arg-362–Arg-374. A Phosphoserine; by PKC/PRKCG and PKC/PRKCD modification is found at Ser-368. 2 positions are modified to phosphoserine: Ser-369 and Ser-373.

Belongs to the connexin family. Alpha-type (group II) subfamily. As to quaternary structure, a connexon is composed of a hexamer of connexins. Interacts with SGSM3. Interacts with RIC1/CIP150. Interacts with CNST and CSNK1D. Interacts (via C-terminus) with TJP1. Interacts (via C-terminus) with SRC (via SH3 domain). Interacts (not ubiquitinated) with UBQLN4 (via UBA domain). Interacts with NOV. Interacts with TMEM65. Interacts with ANK3/ANKG and PKP2. Post-translationally, phosphorylation at Ser-325, Ser-328 and Ser-330 by CK1 modulates gap junction assembly. Phosphorylated at Ser-368 by PRKCG; phosphorylation induces disassembly of gap junction plaques and inhibition of gap junction activity. Phosphorylation at Ser-368 by PRKCD triggers its internalization into small vesicles leading to proteasome-mediated degradation. Sumoylated with SUMO1, SUMO2 and SUMO3, which may regulate the level of functional Cx43 gap junctions at the plasma membrane. May be desumoylated by SENP1 or SENP2. In terms of processing, S-nitrosylation at Cys-271 is enriched at the muscle endothelial gap junction in arteries, it augments channel permeability and may regulate of smooth muscle cell to endothelial cell communication. Post-translationally, acetylated in the developing cortex; leading to delocalization from the cell membrane.

It localises to the cell membrane. Its subcellular location is the cell junction. The protein localises to the gap junction. It is found in the endoplasmic reticulum. In terms of biological role, gap junction protein that acts as a regulator of bladder capacity. A gap junction consists of a cluster of closely packed pairs of transmembrane channels, the connexons, through which materials of low MW diffuse from one cell to a neighboring cell. May play a critical role in the physiology of hearing by participating in the recycling of potassium to the cochlear endolymph. Negative regulator of bladder functional capacity: acts by enhancing intercellular electrical and chemical transmission, thus sensitizing bladder muscles to cholinergic neural stimuli and causing them to contract. May play a role in cell growth inhibition through the regulation of NOV expression and localization. Plays an essential role in gap junction communication in the ventricles. This Chlorocebus aethiops (Green monkey) protein is Gap junction alpha-1 protein (GJA1).